The following is a 133-amino-acid chain: MTRLGLVVAEFNRSVTERMEAAAREAAADADAAITDTVHVPGAYDSPLAADRLARRDDIDAVAVVGAIVTGDTDHDHVIASATADTLTDVSLERDTPVTFGVSGPGMSGAEARERVEKGAAAVESAVSLTQEL.

5-amino-6-(D-ribitylamino)uracil-binding positions include Phe11, 43-45 (AYD), and 67-69 (AIV). Residue 72–73 (DT) coordinates (2S)-2-hydroxy-3-oxobutyl phosphate. His75 acts as the Proton donor in catalysis. Phe100 contacts 5-amino-6-(D-ribitylamino)uracil. (2S)-2-hydroxy-3-oxobutyl phosphate is bound at residue Arg115.

It belongs to the DMRL synthase family.

The catalysed reaction is (2S)-2-hydroxy-3-oxobutyl phosphate + 5-amino-6-(D-ribitylamino)uracil = 6,7-dimethyl-8-(1-D-ribityl)lumazine + phosphate + 2 H2O + H(+). It participates in cofactor biosynthesis; riboflavin biosynthesis; riboflavin from 2-hydroxy-3-oxobutyl phosphate and 5-amino-6-(D-ribitylamino)uracil: step 1/2. Its function is as follows. Catalyzes the formation of 6,7-dimethyl-8-ribityllumazine by condensation of 5-amino-6-(D-ribitylamino)uracil with 3,4-dihydroxy-2-butanone 4-phosphate. This is the penultimate step in the biosynthesis of riboflavin. The chain is 6,7-dimethyl-8-ribityllumazine synthase from Halobacterium salinarum (strain ATCC 29341 / DSM 671 / R1).